The chain runs to 179 residues: Adenine phosphoribosyltransferase (179 aa).

The protein belongs to the purine/pyrimidine phosphoribosyltransferase family. In terms of assembly, homodimer.

It localises to the cytoplasm. The catalysed reaction is AMP + diphosphate = 5-phospho-alpha-D-ribose 1-diphosphate + adenine. It functions in the pathway purine metabolism; AMP biosynthesis via salvage pathway; AMP from adenine: step 1/1. Its function is as follows. Catalyzes a salvage reaction resulting in the formation of AMP, that is energically less costly than de novo synthesis. The sequence is that of Adenine phosphoribosyltransferase from Actinobacillus pleuropneumoniae serotype 5b (strain L20).